The chain runs to 271 residues: Pyrroline-5-carboxylate reductase (271 aa).

Belongs to the pyrroline-5-carboxylate reductase family.

It is found in the cytoplasm. The enzyme catalyses L-proline + NADP(+) = (S)-1-pyrroline-5-carboxylate + NADPH + 2 H(+). The catalysed reaction is L-proline + NAD(+) = (S)-1-pyrroline-5-carboxylate + NADH + 2 H(+). The protein operates within amino-acid biosynthesis; L-proline biosynthesis; L-proline from L-glutamate 5-semialdehyde: step 1/1. In terms of biological role, catalyzes the reduction of 1-pyrroline-5-carboxylate (PCA) to L-proline. In Staphylococcus epidermidis (strain ATCC 35984 / DSM 28319 / BCRC 17069 / CCUG 31568 / BM 3577 / RP62A), this protein is Pyrroline-5-carboxylate reductase.